The chain runs to 219 residues: Charged multivesicular body protein 5 (219 aa).

The segment covering 1 to 10 (MNRFFGKAKP) has biased composition (basic residues). A disordered region spans residues 1–21 (MNRFFGKAKPKAPPPSLTDCI). Residues 26–179 (SRAESIDKKI…LGDELLADED (154 aa)) adopt a coiled-coil conformation. Position 86 is a phosphoserine (Ser-86). Positions 188–219 (SAPAIPEGVPTDTKNKDGVLVDEFGLPQIPAS) are disordered.

It belongs to the SNF7 family. As to quaternary structure, probable peripherally associated component of the endosomal sorting required for transport complex III (ESCRT-III). ESCRT-III components are thought to multimerize to form a flat lattice on the perimeter membrane of the endosome. Several assembly forms of ESCRT-III may exist that interact and act sequentially. Interacts with VTA1. Interacts with CHMP2A. Interacts with VTA1; the interaction involves soluble CHMP5. Interacts with NOD2. Interacts with BROX. Post-translationally, ISGylated. Isgylation inhibits its interaction with VTA1.

It is found in the cytoplasm. The protein localises to the cytosol. It localises to the endosome membrane. Its subcellular location is the midbody. Functionally, probable peripherally associated component of the endosomal sorting required for transport complex III (ESCRT-III) which is involved in multivesicular bodies (MVBs) formation and sorting of endosomal cargo proteins into MVBs. MVBs contain intraluminal vesicles (ILVs) that are generated by invagination and scission from the limiting membrane of the endosome and mostly are delivered to lysosomes enabling degradation of membrane proteins, such as stimulated growth factor receptors, lysosomal enzymes and lipids. The MVB pathway appears to require the sequential function of ESCRT-O, -I,-II and -III complexes. ESCRT-III proteins mostly dissociate from the invaginating membrane before the ILV is released. The ESCRT machinery also functions in topologically equivalent membrane fission events, such as the terminal stages of cytokinesis. ESCRT-III proteins are believed to mediate the necessary vesicle extrusion and/or membrane fission activities, possibly in conjunction with the AAA ATPase VPS4. In Mus musculus (Mouse), this protein is Charged multivesicular body protein 5 (Chmp5).